A 603-amino-acid polypeptide reads, in one-letter code: NADH-ubiquinone oxidoreductase chain 5 (603 aa).

The next 16 helical transmembrane spans lie at 4–24 (FTTM…ATLI), 38–58 (TAIA…ICLG), 89–109 (FLPV…WYMA), 122–142 (LIFL…QLFI), 171–191 (AILY…WFLL), 211–233 (LPLL…HPWL), 241–261 (TPVS…FLLI), 273–293 (IQTL…ICAL), 301–320 (IVAF…IGIN), 325–347 (AFLH…GSII), 366–386 (MPLT…MPFL), 405–424 (NAWA…AYST), 457–477 (LMTG…PTSL), 488–508 (LAAL…NYLA), 537–557 (IPHL…DLTW), and 582–602 (GMIK…LLMI).

Belongs to the complex I subunit 5 family. Core subunit of respiratory chain NADH dehydrogenase (Complex I) which is composed of 45 different subunits.

The protein resides in the mitochondrion inner membrane. The enzyme catalyses a ubiquinone + NADH + 5 H(+)(in) = a ubiquinol + NAD(+) + 4 H(+)(out). Its function is as follows. Core subunit of the mitochondrial membrane respiratory chain NADH dehydrogenase (Complex I) which catalyzes electron transfer from NADH through the respiratory chain, using ubiquinone as an electron acceptor. Essential for the catalytic activity and assembly of complex I. This is NADH-ubiquinone oxidoreductase chain 5 (MT-ND5) from Pongo pygmaeus (Bornean orangutan).